The following is a 573-amino-acid chain: Phosphoenolpyruvate-protein phosphotransferase (573 aa).

Residue histidine 190 is the Tele-phosphohistidine intermediate of the active site. Arginine 297 and arginine 332 together coordinate phosphoenolpyruvate. Glutamate 431 and aspartate 455 together coordinate Mg(2+). Residues 454-455 (ND) and arginine 465 contribute to the phosphoenolpyruvate site. Cysteine 502 serves as the catalytic Proton donor.

Belongs to the PEP-utilizing enzyme family. As to quaternary structure, homodimer. It depends on Mg(2+) as a cofactor.

It localises to the cytoplasm. The enzyme catalyses L-histidyl-[protein] + phosphoenolpyruvate = N(pros)-phospho-L-histidyl-[protein] + pyruvate. With respect to regulation, irreversibly inhibited the sulfhydryl reagent N-ethylmaleimide (NEM). Its function is as follows. General (non sugar-specific) component of the phosphoenolpyruvate-dependent sugar phosphotransferase system (sugar PTS). This major carbohydrate active-transport system catalyzes the phosphorylation of incoming sugar substrates concomitantly with their translocation across the cell membrane. Enzyme I transfers the phosphoryl group from phosphoenolpyruvate (PEP) to the phosphoryl carrier protein (HPr). This chain is Phosphoenolpyruvate-protein phosphotransferase (ptsI), found in Mycoplasma capricolum subsp. capricolum (strain California kid / ATCC 27343 / NCTC 10154).